A 293-amino-acid chain; its full sequence is Protease HtpX (293 aa).

The next 2 helical transmembrane spans lie at 4 to 24 and 34 to 54; these read IALF…VLSL and GLLI…LLMS. A Zn(2+)-binding site is contributed by His-139. Glu-140 is a catalytic residue. Zn(2+) is bound at residue His-143. A run of 2 helical transmembrane segments spans residues 158-178 and 193-213; these read VVNT…AGFM and LIYF…ASII. A Zn(2+)-binding site is contributed by Glu-222.

Belongs to the peptidase M48B family. Zn(2+) serves as cofactor.

It localises to the cell inner membrane. The sequence is that of Protease HtpX from Enterobacter sp. (strain 638).